The following is a 278-amino-acid chain: S-formylglutathione hydrolase YeiG (278 aa).

Residues serine 145, aspartate 223, and histidine 256 each act as charge relay system in the active site.

This sequence belongs to the esterase D family.

The enzyme catalyses S-formylglutathione + H2O = formate + glutathione + H(+). Its function is as follows. Serine hydrolase involved in the detoxification of formaldehyde. Hydrolyzes S-formylglutathione to glutathione and formate. The polypeptide is S-formylglutathione hydrolase YeiG (yeiG) (Shigella boydii serotype 4 (strain Sb227)).